Here is a 382-residue protein sequence, read N- to C-terminus: Sphingoid long-chain base transporter RSB1 (382 aa).

Residues 1–34 (MSNATNNTLGSLLPQLEAAANSNSLYGGMVPNLR) lie on the Extracellular side of the membrane. 2 N-linked (GlcNAc...) asparagine glycosylation sites follow: Asn3 and Asn6. The chain crosses the membrane as a helical span at residues 35 to 55 (FNITMIVIWGILLTIHVVQLL). The Cytoplasmic portion of the chain corresponds to 56-57 (MR). The chain crosses the membrane as a helical span at residues 58-78 (QYWFSIAFICTGILEVLGFIG). The Extracellular segment spans residues 79-90 (RTWSHSNVADMD). A helical membrane pass occupies residues 91–111 (AFLLNMICLTIAPVFTMGGIY). Residues 112–135 (YQLAKLIEVYGHRFSLLPSPMAYS) are Cytoplasmic-facing. Residues 136 to 156 (FIFICSDIVSLVVQAVGGGLC) form a helical membrane-spanning segment. The Extracellular portion of the chain corresponds to 157 to 171 (GVAVTDGTSTTTGNH). Residues 172 to 192 (VFIAGLAIQVASMAIFLMLWF) form a helical membrane-spanning segment. The Cytoplasmic segment spans residues 193–241 (HFLFRIYISVRWEHINSRPISLSLLKISQTEVDYLYREKFHFLRLEPKR). Residues 242–262 (WVFHYFNLAMTVAVLTIFTRC) traverse the membrane as a helical segment. The Extracellular portion of the chain corresponds to 263–281 (CYRLAELVVGWDGYLITHE). The chain crosses the membrane as a helical span at residues 282-302 (WYFIILDALMMAIATVTLTIF). Residues 303–382 (HPGFAFKGRS…LFSSKKKAKL (80 aa)) are Cytoplasmic-facing.

This sequence belongs to the lipid-translocating exporter (LTE) (TC 9.A.26.1) family.

Its subcellular location is the cell membrane. Catalyzes the ATP-dependent translocation of sphingoid long-chain bases (LCBs) from the cytoplasmic site toward the extracytoplasmic side of the membrane (flip-flop). Involved in the establishment of the functional lipid asymmetry of the plasma membrane. Regulates intracellular levels of LCBs, sphingolipid precursors that are growth inhibitory at increased levels. The polypeptide is Sphingoid long-chain base transporter RSB1 (RSB1) (Saccharomyces cerevisiae (strain AWRI1631) (Baker's yeast)).